The chain runs to 622 residues: 1-deoxy-D-xylulose-5-phosphate synthase (622 aa).

Residues His80 and 121 to 123 (GHS) each bind thiamine diphosphate. Residue Asp152 coordinates Mg(2+). Thiamine diphosphate is bound by residues 153–154 (GA), Asn181, Tyr288, and Glu370. Mg(2+) is bound at residue Asn181.

The protein belongs to the transketolase family. DXPS subfamily. In terms of assembly, homodimer. The cofactor is Mg(2+). Thiamine diphosphate serves as cofactor.

It carries out the reaction D-glyceraldehyde 3-phosphate + pyruvate + H(+) = 1-deoxy-D-xylulose 5-phosphate + CO2. Its pathway is metabolic intermediate biosynthesis; 1-deoxy-D-xylulose 5-phosphate biosynthesis; 1-deoxy-D-xylulose 5-phosphate from D-glyceraldehyde 3-phosphate and pyruvate: step 1/1. Catalyzes the acyloin condensation reaction between C atoms 2 and 3 of pyruvate and glyceraldehyde 3-phosphate to yield 1-deoxy-D-xylulose-5-phosphate (DXP). The polypeptide is 1-deoxy-D-xylulose-5-phosphate synthase (Shewanella baltica (strain OS195)).